A 2233-amino-acid chain; its full sequence is Acetyl-CoA carboxylase (2233 aa).

The residue at position 2 (S2) is an N-acetylserine. Residue S2 is modified to Phosphoserine. The Biotin carboxylation domain occupies 58-567; that stretch reads VISKILIANN…TTGWLDDLIT (510 aa). The ATP-grasp domain maps to 216–408; sequence KTGLVSVDDD…LPAAQLQIAM (193 aa). An ATP-binding site is contributed by 256–261; that stretch reads GGGGKG. Residues E365, E379, and N381 each contribute to the Mn(2+) site. R383 is an active-site residue. In terms of domain architecture, Biotinyl-binding spans 694 to 768; it reads LEVENDPTQL…VAGDIMAIMT (75 aa). Residue K735 is modified to N6-biotinyllysine. 4 positions are modified to phosphoserine: S790, S1148, S1157, and S1162. The region spanning 1486 to 1822 is the CoA carboxyltransferase N-terminal domain; that stretch reads PYPVKEWLQP…KRNMPVPILE (337 aa). The segment at 1486-2141 is carboxyltransferase; the sequence is PYPVKEWLQP…EEYLIKRLSH (656 aa). Position 1627-1629 (1627-1629) interacts with acetyl-CoA; that stretch reads ARI. A CoA-binding site is contributed by R1731. The CoA carboxyltransferase C-terminal domain occupies 1826–2141; the sequence is TWDRPVDFTP…EEYLIKRLSH (316 aa). Acetyl-CoA is bound at residue G1998. Residues K2034 and R2036 each coordinate CoA.

As to quaternary structure, homodimer. Requires biotin as cofactor. Mn(2+) serves as cofactor.

It localises to the cytoplasm. It is found in the endoplasmic reticulum membrane. It catalyses the reaction hydrogencarbonate + acetyl-CoA + ATP = malonyl-CoA + ADP + phosphate + H(+). The catalysed reaction is N(6)-biotinyl-L-lysyl-[protein] + hydrogencarbonate + ATP = N(6)-carboxybiotinyl-L-lysyl-[protein] + ADP + phosphate + H(+). It functions in the pathway lipid metabolism; malonyl-CoA biosynthesis; malonyl-CoA from acetyl-CoA: step 1/1. Its activity is regulated as follows. By phosphorylation. The catalytic activity is inhibited by soraphen A, a polyketide isolated from the myxobacterium Sorangium cellulosum and a potent inhibitor of fungal growth. In terms of biological role, carries out three functions: biotin carboxyl carrier protein, biotin carboxylase and carboxyltransferase. Involved in the synthesis of very-long-chain fatty acid synthesis which is required to maintain a functional nuclear envelope. Required for acylation and vacuolar membrane association of VAC8 which is necessary to maintain a normal morphology of the vacuole. This chain is Acetyl-CoA carboxylase (ACC1), found in Saccharomyces cerevisiae (strain ATCC 204508 / S288c) (Baker's yeast).